Here is a 365-residue protein sequence, read N- to C-terminus: Sulfate/thiosulfate import ATP-binding protein CysA (365 aa).

Residues 3–237 (IEIANIKKSF…PATRFVLEFM (235 aa)) enclose the ABC transporter domain. An ATP-binding site is contributed by 35-42 (GPSGSGKT).

This sequence belongs to the ABC transporter superfamily. Sulfate/tungstate importer (TC 3.A.1.6) family. As to quaternary structure, the complex is composed of two ATP-binding proteins (CysA), two transmembrane proteins (CysT and CysW) and a solute-binding protein (CysP).

It localises to the cell inner membrane. It catalyses the reaction sulfate(out) + ATP + H2O = sulfate(in) + ADP + phosphate + H(+). The catalysed reaction is thiosulfate(out) + ATP + H2O = thiosulfate(in) + ADP + phosphate + H(+). In terms of biological role, part of the ABC transporter complex CysAWTP involved in sulfate/thiosulfate import. Responsible for energy coupling to the transport system. This is Sulfate/thiosulfate import ATP-binding protein CysA from Shigella flexneri.